A 1647-amino-acid polypeptide reads, in one-letter code: Probable ubiquitin fusion degradation protein C12B10.01c (1647 aa).

The segment covering 192 to 209 (TYSDSSNYHTSTDSSQYN) has biased composition (polar residues). Disordered regions lie at residues 192–288 (TYSD…PSAA) and 1039–1076 (ESMS…SSTS). Composition is skewed to acidic residues over residues 218–228 (DTNDGTDDDIN) and 245–273 (ERDE…ENEN). The segment covering 1039-1050 (ESMSGSSRNSSG) has biased composition (low complexity). Over residues 1051–1065 (DYTDSMSQDAPNHTT) the composition is skewed to polar residues. The segment covering 1066–1076 (EPSERRDSSTS) has biased composition (basic and acidic residues). The tract at residues 1183 to 1257 (IENILTDFSN…SVSFLLSRNP (75 aa)) is K-box. The 354-residue stretch at 1294–1647 (ATYAASENIL…LEGQGSFHLS (354 aa)) folds into the HECT domain. Residue Cys-1614 is the Glycyl thioester intermediate of the active site.

It belongs to the UPL family. K-HECT subfamily.

The enzyme catalyses S-ubiquitinyl-[E2 ubiquitin-conjugating enzyme]-L-cysteine + [acceptor protein]-L-lysine = [E2 ubiquitin-conjugating enzyme]-L-cysteine + N(6)-ubiquitinyl-[acceptor protein]-L-lysine.. E3 ubiquitin-protein ligase which accepts ubiquitin from an E2 ubiquitin-conjugating enzyme in the form of a thioester and then directly transfers the ubiquitin to targeted substrates. This chain is Probable ubiquitin fusion degradation protein C12B10.01c, found in Schizosaccharomyces pombe (strain 972 / ATCC 24843) (Fission yeast).